The primary structure comprises 83 residues: MKKVLALVVAAAMGLSSAAFAAETATPAKTAAPAKTTQTTQHHKKQHKKTVEQKAQAAKKHQKKDGKKAPAKSTSKTTSQPAA.

The N-terminal stretch at 1–21 (MKKVLALVVAAAMGLSSAAFA) is a signal peptide. Positions 22-40 (AETATPAKTAAPAKTTQTT) are enriched in low complexity. Residues 22 to 56 (AETATPAKTAAPAKTTQTTQHHKKQHKKTVEQKAQ) constitute a propeptide that is removed on maturation. The tract at residues 22-83 (AETATPAKTA…TSKTTSQPAA (62 aa)) is disordered. Residues 57–70 (AAKKHQKKDGKKAP) are compositionally biased toward basic residues. Residues 71 to 83 (AKSTSKTTSQPAA) are compositionally biased toward low complexity.

It belongs to the Asr family. Post-translationally, proteolytic processing gives rise to the active protein.

It is found in the periplasm. Functionally, required for growth and/or survival at acidic conditions. The chain is Acid shock protein (asr) from Salmonella typhi.